Consider the following 732-residue polypeptide: Glycine--tRNA ligase (732 aa).

A mitochondrion-targeting transit peptide spans 1–27 (MRHVLSLVYKCSVFSKQVTVFSNHLRL). Residues 61 to 117 (ILAPLRANVKEQGDLVRKLKEEKAPEIDIKKAVAELKTRKKILEDKELSLAPAEDLF) form the WHEP-TRS domain. Glu297 is a binding site for glycine. Residues 329 to 331 (RNE) and 340 to 341 (RV) each bind ATP. Glu348 contributes to the glycine binding site. Position 453–454 (453–454 (EC)) interacts with ATP. 572-574 (EPS) serves as a coordination point for glycine. Arg579 is an ATP binding site.

Belongs to the class-II aminoacyl-tRNA synthetase family. Homodimer.

Its subcellular location is the mitochondrion. It is found in the cytoplasm. It localises to the cell projection. The protein localises to the axon. It catalyses the reaction tRNA(Gly) + glycine + ATP = glycyl-tRNA(Gly) + AMP + diphosphate. It carries out the reaction 2 ATP + H(+) = P(1),P(4)-bis(5'-adenosyl) tetraphosphate + diphosphate. Functionally, catalyzes the ATP-dependent ligation of glycine to the 3'-end of its cognate tRNA, via the formation of an aminoacyl-adenylate intermediate (Gly-AMP). Also produces diadenosine tetraphosphate (Ap4A), a universal pleiotropic signaling molecule needed for cell regulation pathways, by direct condensation of 2 ATPs. Thereby, may play a special role in Ap4A homeostasis. Required for terminal arborization of both dendrites and axons during development. This Bombyx mori (Silk moth) protein is Glycine--tRNA ligase.